The following is a 93-amino-acid chain: Small ribosomal subunit protein uS19 (93 aa).

It belongs to the universal ribosomal protein uS19 family.

Its function is as follows. Protein S19 forms a complex with S13 that binds strongly to the 16S ribosomal RNA. The protein is Small ribosomal subunit protein uS19 of Anaplasma marginale (strain Florida).